A 595-amino-acid polypeptide reads, in one-letter code: Aspartate--tRNA(Asp/Asn) ligase (595 aa).

Glu-178 contacts L-aspartate. The tract at residues 202 to 205 (QIFK) is aspartate. Arg-224 provides a ligand contact to L-aspartate. Residues 224 to 226 (RDE) and Gln-233 each bind ATP. His-458 contacts L-aspartate. Residue Glu-488 coordinates ATP. Arg-495 contacts L-aspartate. 540-543 (GIDR) is a binding site for ATP.

Belongs to the class-II aminoacyl-tRNA synthetase family. Type 1 subfamily. Homodimer.

The protein localises to the cytoplasm. It catalyses the reaction tRNA(Asx) + L-aspartate + ATP = L-aspartyl-tRNA(Asx) + AMP + diphosphate. Aspartyl-tRNA synthetase with relaxed tRNA specificity since it is able to aspartylate not only its cognate tRNA(Asp) but also tRNA(Asn). Reaction proceeds in two steps: L-aspartate is first activated by ATP to form Asp-AMP and then transferred to the acceptor end of tRNA(Asp/Asn). This chain is Aspartate--tRNA(Asp/Asn) ligase, found in Acaryochloris marina (strain MBIC 11017).